Reading from the N-terminus, the 285-residue chain is Geranyl diphosphate 2-C-methyltransferase (285 aa).

It belongs to the geranyl diphosphate 2-C-methyltransferase family. It depends on Mg(2+) as a cofactor.

The enzyme catalyses (2E)-geranyl diphosphate + S-adenosyl-L-methionine = (E)-2-methylgeranyl diphosphate + S-adenosyl-L-homocysteine + H(+). Functionally, catalyzes the SAM-dependent methylation of geranyl diphosphate (GPP) to yield (E)-2-methylgeranyl diphosphate (2-MeGPP). The chain is Geranyl diphosphate 2-C-methyltransferase from Saccharopolyspora erythraea (strain ATCC 11635 / DSM 40517 / JCM 4748 / NBRC 13426 / NCIMB 8594 / NRRL 2338).